A 352-amino-acid chain; its full sequence is Photosystem II D2 protein (352 aa).

Residues 40 to 60 traverse the membrane as a helical segment; the sequence is CAYLALGGWLTGTTFVTSWYT. A chlorophyll a-binding site is contributed by H117. A helical membrane pass occupies residues 124–140; that stretch reads GFMLRQFEIARLVGVRP. Pheophytin a-binding residues include Q129 and N142. A helical transmembrane segment spans residues 152–165; that stretch reads VFVSVFLIYPLGQS. A chlorophyll a-binding site is contributed by H197. A helical membrane pass occupies residues 207-227; sequence GALLCAIHGATVENTLFQDGE. The a plastoquinone site is built by H214 and F261. H214 serves as a coordination point for Fe cation. H268 contacts Fe cation. A helical transmembrane segment spans residues 278 to 294; it reads GLWMSSIGVVGLALNLR.

It belongs to the reaction center PufL/M/PsbA/D family. In terms of assembly, PSII is composed of 1 copy each of membrane proteins PsbA, PsbB, PsbC, PsbD, PsbE, PsbF, PsbH, PsbI, PsbJ, PsbK, PsbL, PsbM, PsbT, PsbX, PsbY, PsbZ, Psb30/Ycf12, peripheral proteins PsbO, CyanoQ (PsbQ), PsbU, PsbV and a large number of cofactors. It forms dimeric complexes. The D1/D2 heterodimer binds P680, chlorophylls that are the primary electron donor of PSII, and subsequent electron acceptors. It shares a non-heme iron and each subunit binds pheophytin, quinone, additional chlorophylls, carotenoids and lipids. There is also a Cl(-1) ion associated with D1 and D2, which is required for oxygen evolution. The PSII complex binds additional chlorophylls, carotenoids and specific lipids. serves as cofactor.

Its subcellular location is the cellular thylakoid membrane. The catalysed reaction is 2 a plastoquinone + 4 hnu + 2 H2O = 2 a plastoquinol + O2. Photosystem II (PSII) is a light-driven water:plastoquinone oxidoreductase that uses light energy to abstract electrons from H(2)O, generating O(2) and a proton gradient subsequently used for ATP formation. It consists of a core antenna complex that captures photons, and an electron transfer chain that converts photonic excitation into a charge separation. The D1/D2 (PsbA/PsbD) reaction center heterodimer binds P680, the primary electron donor of PSII as well as several subsequent electron acceptors. D2 is needed for assembly of a stable PSII complex. The sequence is that of Photosystem II D2 protein from Synechococcus sp. (strain JA-2-3B'a(2-13)) (Cyanobacteria bacterium Yellowstone B-Prime).